A 368-amino-acid chain; its full sequence is Histidinol-phosphate aminotransferase (368 aa).

N6-(pyridoxal phosphate)lysine is present on K215.

Belongs to the class-II pyridoxal-phosphate-dependent aminotransferase family. Histidinol-phosphate aminotransferase subfamily. In terms of assembly, homodimer. The cofactor is pyridoxal 5'-phosphate.

It catalyses the reaction L-histidinol phosphate + 2-oxoglutarate = 3-(imidazol-4-yl)-2-oxopropyl phosphate + L-glutamate. It functions in the pathway amino-acid biosynthesis; L-histidine biosynthesis; L-histidine from 5-phospho-alpha-D-ribose 1-diphosphate: step 7/9. The chain is Histidinol-phosphate aminotransferase (hisC) from Buchnera aphidicola subsp. Acyrthosiphon pisum (strain APS) (Acyrthosiphon pisum symbiotic bacterium).